Reading from the N-terminus, the 186-residue chain is Bis(5'-nucleosyl)-tetraphosphatase, symmetrical (186 aa).

Positions 18–132 (RYIHTVGVMN…IYVADYIEPN (115 aa)) constitute an HD domain. His21 contributes to the ADP binding site. His21, His50, and Asp51 together coordinate Fe cation. Residues 51-54 (DYAK), His83, 109-110 (HT), Asp127, Arg133, and 170-175 (PVFPDT) each bind ADP. Asp127 provides a ligand contact to Fe cation.

This sequence belongs to the Ap4A hydrolase YqeK family. Homodimer.

It carries out the reaction P(1),P(4)-bis(5'-adenosyl) tetraphosphate + H2O = 2 ADP + 2 H(+). Functionally, hydrolyzes diadenosine 5',5'''-P1,P4-tetraphosphate (Ap4A) to yield ADP. This chain is Bis(5'-nucleosyl)-tetraphosphatase, symmetrical (yqeK), found in Bacillus subtilis (strain 168).